We begin with the raw amino-acid sequence, 95 residues long: MKIEVIKKEQDLLEFYLEGEDHTFANLLTETLRENPHVKFVAYTIEHPILMARKPRFRVVTDGKITPEKALEEAAKKIFDRAKEVLDAWEKAIKG.

Belongs to the archaeal Rpo11/eukaryotic RPB11/RPC19 RNA polymerase subunit family. As to quaternary structure, part of the RNA polymerase complex.

Its subcellular location is the cytoplasm. The catalysed reaction is RNA(n) + a ribonucleoside 5'-triphosphate = RNA(n+1) + diphosphate. In terms of biological role, DNA-dependent RNA polymerase (RNAP) catalyzes the transcription of DNA into RNA using the four ribonucleoside triphosphates as substrates. This is DNA-directed RNA polymerase subunit Rpo11 from Pyrococcus abyssi (strain GE5 / Orsay).